Consider the following 347-residue polypeptide: UDP-rhamnose/UDP-galactose transporter 1 (347 aa).

10 helical membrane passes run 11-31, 43-63, 80-100, 103-123, 132-152, 159-179, 195-215, 223-243, 256-276, and 285-305; these read AVSDVGAWAMNVISSVGIIMA, FGFATTLTGFHFAFTALVGMV, LLWFSIVANISIAAMNFSLML, VGFYQISKLSMIPVVCVLEWI, EVKASVMVVVIGVGICTVTDV, FICACTAVFSTSLQQISIGSL, APIQAISLLICGPFVDYLLSG, MTYGAIFCILLSCALAVFCNI, SFQVLGHMKTVCVLTLGWLLF, and IAGMAIAIVGMVIYSWAVDIE.

The protein belongs to the TPT transporter family. TPT (TC 2.A.7.9) subfamily. As to expression, widely expressed in the whole plant.

It localises to the golgi apparatus membrane. In terms of biological role, nucleotide-sugar transporter that transports UDP-rhamnose or UDP-galactose and UMP in a strict counter-exchange mode. In Arabidopsis thaliana (Mouse-ear cress), this protein is UDP-rhamnose/UDP-galactose transporter 1.